Reading from the N-terminus, the 271-residue chain is Short chain dehydrogenase asqE (271 aa).

Ile22, Asp70, and Asn99 together coordinate NADP(+). Residues Ser152 and Ser153 each act as proton donor in the active site. NADP(+) is bound by residues Tyr167, Lys171, and Thr203. Tyr167 functions as the Proton acceptor in the catalytic mechanism. The active-site Lowers pKa of active site Tyr is the Lys171.

The protein belongs to the short-chain dehydrogenases/reductases (SDR) family.

The catalysed reaction is a primary alcohol + NAD(+) = an aldehyde + NADH + H(+). The enzyme catalyses a secondary alcohol + NAD(+) = a ketone + NADH + H(+). It participates in secondary metabolite biosynthesis. It functions in the pathway alkaloid biosynthesis. Its pathway is mycotoxin biosynthesis. Short chain dehydrogenase; part of the gene cluster that mediates the biosynthesis of the aspoquinolone mycotoxins. The role of asqE within the aspoquinolone pathway has still to be determined. The first step of the pathway is catalyzed by the nonribosomal peptide synthetase asqK that condenses anthranilic acid and O-methyl-L-tyrosine to produce 4'-methoxycyclopeptin. 4'-methoxycyclopeptin is then converted to 4'-methoxydehydrocyclopeptin by the ketoglutarate-dependent dioxygenase asqJ. AsqJ also converts its first product 4'-methoxydehydrocyclopeptin to 4'-methoxycyclopenin. The following conversion of 4'-methoxycyclopenin into 4'-methoxyviridicatin is catalyzed by the cyclopenase asqI. 4'-methoxyviridicatin is the precursor of quinolone natural products, and is further converted to quinolinone B. The prenyltransferase asqH1 then catalyzes the canonical Friedel-Crafts alkylation of quinolinone B with dimethylallyl cation to yield dimethylallyl quinolone, which is subjected to FAD-dependent dehydrogenation by the FAD-linked oxidoreductase asqF to yield conjugated aryl diene. The delta(3') double bond then serves as the site of the second alkylation with DMAPP catalyzed by the prenyltransferase asqH2 to yield a carbenium ion intermediate, which can be attacked by H(2)O to yield a styrenyl quinolone containing a C3'-hydroxyprenyl chain. The FAD-dependent monooxygenase asqG performs epoxidation of the terminal C7'-C8' olefin. Finally, after dehydratation of the epoxide at C3 by asqC, the quinolone epoxide rearrangement protein asqO catalyzes an enzymatic 3-exo-tet cyclization to yield the cyclopropyl-THF ring system in aspoquinolone. This Emericella nidulans (strain FGSC A4 / ATCC 38163 / CBS 112.46 / NRRL 194 / M139) (Aspergillus nidulans) protein is Short chain dehydrogenase asqE.